The chain runs to 222 residues: L-cystine transport system permease protein TcyL (222 aa).

Residues 1-22 are Periplasmic-facing; it reads MQESIQLVIDSLPFLLKGAGYT. One can recognise an ABC transmembrane type-1 domain in the interval 19 to 207; it reads AGYTLQLSIG…IMATVLSTLQ (189 aa). Residues 23-43 form a helical membrane-spanning segment; it reads LQLSIGGMFFGLLLGFILALM. The Cytoplasmic portion of the chain corresponds to 44-64; the sequence is RLSPIWPVRWLARFYISIFRG. Residues 65–85 traverse the membrane as a helical segment; it reads TPLIAQLFMIYYGLPQFGIEL. The Periplasmic segment spans residues 86-182; sequence DPIPSAMIGL…RQAQLITSRT (97 aa). The chain crosses the membrane as a helical span at residues 183 to 203; sequence LEVFTMYLAASLIYWIMATVL. The Cytoplasmic portion of the chain corresponds to 204-222; it reads STLQNHFENQLNRQEREPK.

This sequence belongs to the binding-protein-dependent transport system permease family. HisMQ subfamily. In terms of assembly, the complex is composed of two ATP-binding proteins (TcyN), two transmembrane proteins (TcyL) and a solute-binding protein (TcyJ).

It localises to the cell inner membrane. Part of the ABC transporter complex TcyJLN involved in L-cystine import. Responsible for the translocation of the substrate across the membrane. In Escherichia coli O6:H1 (strain CFT073 / ATCC 700928 / UPEC), this protein is L-cystine transport system permease protein TcyL.